The chain runs to 105 residues: Large ribosomal subunit protein uL24 (105 aa).

The segment covering Asp77–Lys93 has biased composition (basic and acidic residues). Residues Asp77–Leu105 form a disordered region.

The protein belongs to the universal ribosomal protein uL24 family. As to quaternary structure, part of the 50S ribosomal subunit.

Functionally, one of two assembly initiator proteins, it binds directly to the 5'-end of the 23S rRNA, where it nucleates assembly of the 50S subunit. One of the proteins that surrounds the polypeptide exit tunnel on the outside of the subunit. The chain is Large ribosomal subunit protein uL24 from Mycolicibacterium gilvum (strain PYR-GCK) (Mycobacterium gilvum (strain PYR-GCK)).